Consider the following 133-residue polypeptide: Small ribosomal subunit protein uS8 (133 aa).

The protein belongs to the universal ribosomal protein uS8 family. As to quaternary structure, part of the 30S ribosomal subunit. Contacts proteins S5 and S12.

Its function is as follows. One of the primary rRNA binding proteins, it binds directly to 16S rRNA central domain where it helps coordinate assembly of the platform of the 30S subunit. The protein is Small ribosomal subunit protein uS8 of Mycoplasma mobile (strain ATCC 43663 / 163K / NCTC 11711) (Mesomycoplasma mobile).